A 264-amino-acid polypeptide reads, in one-letter code: Phosphonoacetaldehyde hydrolase (264 aa).

The Nucleophile role is filled by D9. Mg(2+)-binding residues include D9 and A11. The active-site Schiff-base intermediate with substrate is K50. D183 lines the Mg(2+) pocket.

It belongs to the HAD-like hydrolase superfamily. PhnX family. Homodimer. Mg(2+) is required as a cofactor.

The enzyme catalyses phosphonoacetaldehyde + H2O = acetaldehyde + phosphate + H(+). In terms of biological role, involved in phosphonate degradation. This Bacillus cereus (strain G9842) protein is Phosphonoacetaldehyde hydrolase.